The primary structure comprises 60 residues: uncharacterized protein (60 aa).

This is an uncharacterized protein from Archaeoglobus fulgidus (strain ATCC 49558 / DSM 4304 / JCM 9628 / NBRC 100126 / VC-16).